The sequence spans 369 residues: Putative agmatine deiminase 2 (369 aa).

The active-site Amidino-cysteine intermediate is the cysteine 356.

It belongs to the agmatine deiminase family.

It catalyses the reaction agmatine + H2O = N-carbamoylputrescine + NH4(+). This chain is Putative agmatine deiminase 2, found in Listeria monocytogenes serovar 1/2a (strain ATCC BAA-679 / EGD-e).